The chain runs to 753 residues: 5-methyltetrahydropteroyltriglutamate--homocysteine methyltransferase (753 aa).

5-methyltetrahydropteroyltri-L-glutamate is bound by residues 17 to 20 and K117; that span reads RELK. L-homocysteine contacts are provided by residues 431-433 and E484; that span reads IGS. Residues 431-433 and E484 contribute to the L-methionine site; that span reads IGS. Residues 515-516 and W561 each bind 5-methyltetrahydropteroyltri-L-glutamate; that span reads RC. An L-homocysteine-binding site is contributed by D599. Position 599 (D599) interacts with L-methionine. E605 is a 5-methyltetrahydropteroyltri-L-glutamate binding site. Zn(2+) contacts are provided by H641, C643, and E665. H694 acts as the Proton donor in catalysis. Residue C726 participates in Zn(2+) binding.

This sequence belongs to the vitamin-B12 independent methionine synthase family. The cofactor is Zn(2+).

The catalysed reaction is 5-methyltetrahydropteroyltri-L-glutamate + L-homocysteine = tetrahydropteroyltri-L-glutamate + L-methionine. It functions in the pathway amino-acid biosynthesis; L-methionine biosynthesis via de novo pathway; L-methionine from L-homocysteine (MetE route): step 1/1. In terms of biological role, catalyzes the transfer of a methyl group from 5-methyltetrahydrofolate to homocysteine resulting in methionine formation. The polypeptide is 5-methyltetrahydropteroyltriglutamate--homocysteine methyltransferase (Escherichia coli O157:H7).